Here is a 197-residue protein sequence, read N- to C-terminus: 3-isopropylmalate dehydratase small subunit (197 aa).

The protein belongs to the LeuD family. LeuD type 1 subfamily. Heterodimer of LeuC and LeuD.

The enzyme catalyses (2R,3S)-3-isopropylmalate = (2S)-2-isopropylmalate. It participates in amino-acid biosynthesis; L-leucine biosynthesis; L-leucine from 3-methyl-2-oxobutanoate: step 2/4. Catalyzes the isomerization between 2-isopropylmalate and 3-isopropylmalate, via the formation of 2-isopropylmaleate. The sequence is that of 3-isopropylmalate dehydratase small subunit from Streptococcus suis (strain 98HAH33).